A 179-amino-acid chain; its full sequence is Large ribosomal subunit protein uL5 (179 aa).

Belongs to the universal ribosomal protein uL5 family. Part of the 50S ribosomal subunit; part of the 5S rRNA/L5/L18/L25 subcomplex. Contacts the 5S rRNA and the P site tRNA. Forms a bridge to the 30S subunit in the 70S ribosome.

Its function is as follows. This is one of the proteins that bind and probably mediate the attachment of the 5S RNA into the large ribosomal subunit, where it forms part of the central protuberance. In the 70S ribosome it contacts protein S13 of the 30S subunit (bridge B1b), connecting the 2 subunits; this bridge is implicated in subunit movement. Contacts the P site tRNA; the 5S rRNA and some of its associated proteins might help stabilize positioning of ribosome-bound tRNAs. This Lysinibacillus sphaericus (strain C3-41) protein is Large ribosomal subunit protein uL5.